The sequence spans 260 residues: MLEILYQDEWLVAVNKPSGWLVHRSWLDRDEKVVVMQTVRDQIGQHVFTAHRLDRPTSGVLLMGLSSEAGRLLAQQFEQHQIQKRYHAIVRGWLMEEAVLDYPLAEELDKIADKFAREDKGPQPAVTHYRGLATVEMPVATGRYPTTRYGLVELEPKTGRKHQLRRHLAHLRHPIIGDSKHGDLRQNRSGAEHFGLQRLMLHASQLSLTHPFTGEPLAIHAGLDDTWMQALSQFGWRGLLPENERVEFSAPSGQDGEISS.

The active site involves D54.

The protein belongs to the pseudouridine synthase RluA family.

The enzyme catalyses uridine(65) in tRNA = pseudouridine(65) in tRNA. In terms of biological role, responsible for synthesis of pseudouridine from uracil-65 in transfer RNAs. The chain is tRNA pseudouridine synthase C (truC) from Escherichia coli O6:H1 (strain CFT073 / ATCC 700928 / UPEC).